A 394-amino-acid chain; its full sequence is S-adenosylmethionine synthase (394 aa).

Residue histidine 18 coordinates ATP. Residue aspartate 20 participates in Mg(2+) binding. Position 46 (glutamate 46) interacts with K(+). Positions 59 and 102 each coordinate L-methionine. The tract at residues 102-112 (QSPDIDMGVSA) is flexible loop. ATP is bound by residues 175–177 (DGK), aspartate 250, 256–257 (RK), alanine 273, and lysine 277. Aspartate 250 is a binding site for L-methionine. Position 281 (lysine 281) interacts with L-methionine.

The protein belongs to the AdoMet synthase family. Homotetramer; dimer of dimers. Mg(2+) serves as cofactor. It depends on K(+) as a cofactor.

The protein resides in the cytoplasm. It carries out the reaction L-methionine + ATP + H2O = S-adenosyl-L-methionine + phosphate + diphosphate. It functions in the pathway amino-acid biosynthesis; S-adenosyl-L-methionine biosynthesis; S-adenosyl-L-methionine from L-methionine: step 1/1. Its function is as follows. Catalyzes the formation of S-adenosylmethionine (AdoMet) from methionine and ATP. The overall synthetic reaction is composed of two sequential steps, AdoMet formation and the subsequent tripolyphosphate hydrolysis which occurs prior to release of AdoMet from the enzyme. This is S-adenosylmethionine synthase from Brachyspira hyodysenteriae (strain ATCC 49526 / WA1).